We begin with the raw amino-acid sequence, 165 residues long: MKPVPLILLLATVLLSSHIPPSVCRPRDLAMFDGHGYKSQLDEVLLKAGDNAISYLIGEKILRYLQRNPRLQAGLPPQFPFEVTPLGSRGLGHLARSLPPLEEQRAPEEGNSLEEFVELTKRNDDPPISIDLTFHLLRNMIEMARIESQKEQAELNRKYLDEVGK.

The signal sequence occupies residues 1–18; that stretch reads MKPVPLILLLATVLLSSH. V163 carries the post-translational modification Valine amide.

It belongs to the sauvagine/corticotropin-releasing factor/urotensin I family.

It localises to the secreted. Its function is as follows. Urotensin is found in the teleost caudal neurosecretory system. It has a suggested role in osmoregulation and as a corticotropin-releasing factor. The non-hormonal portion of this precursor may be a urotensin binding protein, urophysin. The chain is UI from Oncorhynchus mykiss (Rainbow trout).